The chain runs to 376 residues: Queuine tRNA-ribosyltransferase (376 aa).

Residue Asp-90 is the Proton acceptor of the active site. Substrate contacts are provided by residues 90 to 94 (DSGGF), Asp-144, Gln-193, and Gly-220. The tract at residues 251-257 (GVGTPED) is RNA binding. Asp-270 serves as the catalytic Nucleophile. Residues 275–279 (TRNAR) are RNA binding; important for wobble base 34 recognition. Cys-308, Cys-310, Cys-313, and His-339 together coordinate Zn(2+).

This sequence belongs to the queuine tRNA-ribosyltransferase family. Homodimer. Within each dimer, one monomer is responsible for RNA recognition and catalysis, while the other monomer binds to the replacement base PreQ1. The cofactor is Zn(2+).

It carries out the reaction 7-aminomethyl-7-carbaguanine + guanosine(34) in tRNA = 7-aminomethyl-7-carbaguanosine(34) in tRNA + guanine. It participates in tRNA modification; tRNA-queuosine biosynthesis. Catalyzes the base-exchange of a guanine (G) residue with the queuine precursor 7-aminomethyl-7-deazaguanine (PreQ1) at position 34 (anticodon wobble position) in tRNAs with GU(N) anticodons (tRNA-Asp, -Asn, -His and -Tyr). Catalysis occurs through a double-displacement mechanism. The nucleophile active site attacks the C1' of nucleotide 34 to detach the guanine base from the RNA, forming a covalent enzyme-RNA intermediate. The proton acceptor active site deprotonates the incoming PreQ1, allowing a nucleophilic attack on the C1' of the ribose to form the product. After dissociation, two additional enzymatic reactions on the tRNA convert PreQ1 to queuine (Q), resulting in the hypermodified nucleoside queuosine (7-(((4,5-cis-dihydroxy-2-cyclopenten-1-yl)amino)methyl)-7-deazaguanosine). This Cupriavidus metallidurans (strain ATCC 43123 / DSM 2839 / NBRC 102507 / CH34) (Ralstonia metallidurans) protein is Queuine tRNA-ribosyltransferase.